We begin with the raw amino-acid sequence, 204 residues long: Leucyl/phenylalanyl-tRNA--protein transferase (204 aa).

The protein belongs to the L/F-transferase family.

It localises to the cytoplasm. It catalyses the reaction N-terminal L-lysyl-[protein] + L-leucyl-tRNA(Leu) = N-terminal L-leucyl-L-lysyl-[protein] + tRNA(Leu) + H(+). It carries out the reaction N-terminal L-arginyl-[protein] + L-leucyl-tRNA(Leu) = N-terminal L-leucyl-L-arginyl-[protein] + tRNA(Leu) + H(+). The catalysed reaction is L-phenylalanyl-tRNA(Phe) + an N-terminal L-alpha-aminoacyl-[protein] = an N-terminal L-phenylalanyl-L-alpha-aminoacyl-[protein] + tRNA(Phe). Functions in the N-end rule pathway of protein degradation where it conjugates Leu, Phe and, less efficiently, Met from aminoacyl-tRNAs to the N-termini of proteins containing an N-terminal arginine or lysine. The polypeptide is Leucyl/phenylalanyl-tRNA--protein transferase (Brucella melitensis biotype 2 (strain ATCC 23457)).